The sequence spans 128 residues: Saitohin (128 aa).

The segment covering 77–87 (SYSSEENSRNG) has biased composition (polar residues). The tract at residues 77–128 (SYSSEENSRNGAEQGRQLSIEGPFQGQNCPSHPAAALPLPMRGESQATSCQV) is disordered.

As to quaternary structure, interacts with PRDX6.

It localises to the cytoplasm. It is found in the nucleus. In Pan troglodytes (Chimpanzee), this protein is Saitohin (STH).